Reading from the N-terminus, the 201-residue chain is Glycolipid transfer protein (201 aa).

Residues 28–168 form a glycolipid transfer protein homology domain region; the sequence is IATTQFLEAC…KDFYAKLGDD (141 aa).

Cargo transport protein that plays a key role in transport and secretion of liamocins, glycolipids (also called heavy oils) composed of a single mannitol or arabitol headgroup linked to either three, four or even six 3,5-dihydroxydecanoic ester tail-groups. The protein is Glycolipid transfer protein of Aureobasidium melanogenum (Aureobasidium pullulans var. melanogenum).